The primary structure comprises 232 residues: Phosphatidylserine decarboxylase proenzyme (232 aa).

Serine 190 acts as the Schiff-base intermediate with substrate; via pyruvic acid in catalysis. Serine 190 bears the Pyruvic acid (Ser); by autocatalysis mark.

It belongs to the phosphatidylserine decarboxylase family. PSD-A subfamily. Heterodimer of a large membrane-associated beta subunit and a small pyruvoyl-containing alpha subunit. The cofactor is pyruvate. Post-translationally, is synthesized initially as an inactive proenzyme. Formation of the active enzyme involves a self-maturation process in which the active site pyruvoyl group is generated from an internal serine residue via an autocatalytic post-translational modification. Two non-identical subunits are generated from the proenzyme in this reaction, and the pyruvate is formed at the N-terminus of the alpha chain, which is derived from the carboxyl end of the proenzyme. The post-translation cleavage follows an unusual pathway, termed non-hydrolytic serinolysis, in which the side chain hydroxyl group of the serine supplies its oxygen atom to form the C-terminus of the beta chain, while the remainder of the serine residue undergoes an oxidative deamination to produce ammonia and the pyruvoyl prosthetic group on the alpha chain.

It is found in the cell membrane. It catalyses the reaction a 1,2-diacyl-sn-glycero-3-phospho-L-serine + H(+) = a 1,2-diacyl-sn-glycero-3-phosphoethanolamine + CO2. Its pathway is phospholipid metabolism; phosphatidylethanolamine biosynthesis; phosphatidylethanolamine from CDP-diacylglycerol: step 2/2. Functionally, catalyzes the formation of phosphatidylethanolamine (PtdEtn) from phosphatidylserine (PtdSer). This is Phosphatidylserine decarboxylase proenzyme from Bradyrhizobium diazoefficiens (strain JCM 10833 / BCRC 13528 / IAM 13628 / NBRC 14792 / USDA 110).